The chain runs to 478 residues: Elongation factor Tu, chloroplastic (478 aa).

A compositionally biased stretch (low complexity) spans 1-29; sequence MASISAATATSSTKLVSSNSTNPLLPSST. Positions 1 to 31 are disordered; sequence MASISAATATSSTKLVSSNSTNPLLPSSTKP. The N-terminal 69 residues, 1–69, are a transit peptide targeting the chloroplast; that stretch reads MASISAATAT…THRHRRFTVR (69 aa). In terms of domain architecture, tr-type G spans 79–283; that stretch reads KPHVNIGTIG…AVDSYIPIPV (205 aa). Residues 88 to 95 form a G1 region; it reads GHVDHGKT. Residue 88 to 95 coordinates GTP; sequence GHVDHGKT. The G2 stretch occupies residues 129-133; that stretch reads GITIN. Residues 150 to 153 are G3; sequence DCPG. Residues 150–154 and 205–208 each bind GTP; these read DCPGH and NKQD. The interval 205-208 is G4; that stretch reads NKQD. The interval 243–245 is G5; sequence SAL.

The protein belongs to the TRAFAC class translation factor GTPase superfamily. Classic translation factor GTPase family. EF-Tu/EF-1A subfamily.

The protein resides in the plastid. It is found in the chloroplast. Its function is as follows. This protein promotes the GTP-dependent binding of aminoacyl-tRNA to the A-site of ribosomes during protein biosynthesis. The chain is Elongation factor Tu, chloroplastic (TUFA) from Nicotiana tabacum (Common tobacco).